The chain runs to 147 residues: UPF0179 protein NP_3406A (147 aa).

The protein belongs to the UPF0179 family.

The polypeptide is UPF0179 protein NP_3406A (Natronomonas pharaonis (strain ATCC 35678 / DSM 2160 / CIP 103997 / JCM 8858 / NBRC 14720 / NCIMB 2260 / Gabara) (Halobacterium pharaonis)).